Reading from the N-terminus, the 313-residue chain is tRNA dimethylallyltransferase (313 aa).

Position 11–18 (Gly11–Thr18) interacts with ATP. Substrate is bound at residue Thr13 to Thr18. Interaction with substrate tRNA regions lie at residues Asp36–Leu39, Gln160–Arg164, and Arg243–Arg248.

The protein belongs to the IPP transferase family. Monomer. Mg(2+) serves as cofactor.

The enzyme catalyses adenosine(37) in tRNA + dimethylallyl diphosphate = N(6)-dimethylallyladenosine(37) in tRNA + diphosphate. Functionally, catalyzes the transfer of a dimethylallyl group onto the adenine at position 37 in tRNAs that read codons beginning with uridine, leading to the formation of N6-(dimethylallyl)adenosine (i(6)A). This Neisseria meningitidis serogroup A / serotype 4A (strain DSM 15465 / Z2491) protein is tRNA dimethylallyltransferase.